Reading from the N-terminus, the 210-residue chain is Glutathione S-transferase P (210 aa).

In terms of domain architecture, GST N-terminal spans 2 to 81 (PPYTIVYFPV…HLGRSLGLYG (80 aa)). Phosphotyrosine; by EGFR is present on tyrosine 4. Glutathione is bound by residues tyrosine 8, arginine 14, tryptophan 39, lysine 45, and 52 to 53 (QL). Threonine 62 carries the phosphothreonine modification. A glutathione-binding site is contributed by 65–66 (QS). Residues 83–204 (DQREAALVDM…SSPDHVNRPI (122 aa)) form the GST C-terminal domain. N6-succinyllysine occurs at positions 103 and 116. N6-acetyllysine is present on lysine 128.

This sequence belongs to the GST superfamily. Pi family. Homodimer. Interacts with CDK5.

The protein localises to the cytoplasm. The protein resides in the mitochondrion. It is found in the nucleus. The enzyme catalyses RX + glutathione = an S-substituted glutathione + a halide anion + H(+). It catalyses the reaction prostaglandin J2 + glutathione = prostaglandin J2-S-(R)-glutathione. The catalysed reaction is prostaglandin J2 + glutathione = prostaglandin J2-S-(S)-glutathione. It carries out the reaction prostaglandin A2 + glutathione = prostaglandin A2-S-(S)-glutathione. The enzyme catalyses 11(S)-hydroxy-14(S),15(S)-epoxy-(5Z,8Z,12E)-eicosatrienoate + glutathione = (11S,15S)-dihydroxy-14(R)-S-glutathionyl-(5Z,8Z,12E)-eicosatrienoate. In terms of biological role, conjugation of reduced glutathione to a wide number of exogenous and endogenous hydrophobic electrophiles. Involved in the formation of glutathione conjugates of both prostaglandin A2 (PGA2) and prostaglandin J2 (PGJ2). Participates in the formation of novel hepoxilin regioisomers. Negatively regulates CDK5 activity via p25/p35 translocation to prevent neurodegeneration. The protein is Glutathione S-transferase P (GSTP1) of Cricetulus longicaudatus (Long-tailed dwarf hamster).